A 174-amino-acid chain; its full sequence is Myosin regulatory light chain sqh (174 aa).

Threonine 21 bears the Phosphothreonine mark. Serine 22 carries the phosphoserine modification. EF-hand domains follow at residues 31-66 and 100-135; these read AQIA…LGKN and DPED…MGDR. Residues aspartate 44, asparagine 46, aspartate 48, and aspartate 55 each coordinate Ca(2+).

As to quaternary structure, myosin is a hexamer of 2 heavy chains and 4 light chains. Phosphorylation plays a central role in myosin regulation.

Required for cytokinesis, could regulate contractile ring function. This Drosophila melanogaster (Fruit fly) protein is Myosin regulatory light chain sqh (sqh).